The sequence spans 133 residues: Lymphocyte antigen 6 complex locus protein G6d (133 aa).

The N-terminal stretch at 1–19 (MKPQFVGILLSSLLGAALG) is a signal peptide. One can recognise a UPAR/Ly6 domain in the interval 22–116 (MRCYNCGGSP…ASHVAPAGIL (95 aa)). A disulfide bond links Cys-27 and Cys-35. O-linked (GalNAc...) threonine glycosylation is found at Thr-40 and Thr-41. Disulfide bonds link Cys-42-Cys-71 and Cys-77-Cys-96. Ser-104 carries GPI-anchor amidated serine lipidation. Positions 105–133 (AVASHVAPAGILAAAATALTCLLPGLWSG) are cleaved as a propeptide — removed in mature form.

As to quaternary structure, homodimer. In terms of processing, O-glycosylated. In terms of tissue distribution, expressed in the adult lung, and in fetal liver, lung, kidney, brain and spleen.

The protein localises to the cell membrane. The protein resides in the cell projection. It is found in the filopodium. The sequence is that of Lymphocyte antigen 6 complex locus protein G6d (LY6G6D) from Homo sapiens (Human).